A 446-amino-acid chain; its full sequence is Elongation factor 1-alpha (446 aa).

One can recognise a tr-type G domain in the interval 5 to 230 (KNHLNLVVIG…DALDQPKRPK (226 aa)). The interval 14–21 (GHVDSGKS) is G1. 14–21 (GHVDSGKS) is a GTP binding site. A G2 region spans residues 70–74 (GITID). The G3 stretch occupies residues 91–94 (DAPG). Residues 91 to 95 (DAPGH) and 153 to 156 (NKMD) contribute to the GTP site. Positions 153-156 (NKMD) are G4. Residues 194 to 196 (SGW) are G5.

Belongs to the TRAFAC class translation factor GTPase superfamily. Classic translation factor GTPase family. EF-Tu/EF-1A subfamily.

The protein resides in the cytoplasm. This protein promotes the GTP-dependent binding of aminoacyl-tRNA to the A-site of ribosomes during protein biosynthesis. This Stylonychia lemnae (Ciliate) protein is Elongation factor 1-alpha (EFAA).